The sequence spans 239 residues: Ribonuclease 3 (239 aa).

The RNase III domain occupies 11-133; it reads HAAIQKKLGY…MFAAVSFDAD (123 aa). Glutamate 46 contributes to the Mg(2+) binding site. The active site involves aspartate 50. Mg(2+) contacts are provided by aspartate 119 and glutamate 122. Glutamate 122 is an active-site residue. A DRBM domain is found at 160 to 230; that stretch reads DGKTALQEAL…AKEALKWLEE (71 aa).

This sequence belongs to the ribonuclease III family. As to quaternary structure, homodimer. Requires Mg(2+) as cofactor.

The protein localises to the cytoplasm. It carries out the reaction Endonucleolytic cleavage to 5'-phosphomonoester.. In terms of biological role, digests double-stranded RNA. Involved in the processing of primary rRNA transcript to yield the immediate precursors to the large and small rRNAs (23S and 16S). Also processes some mRNAs, and tRNAs when they are encoded in the rRNA operon. Its function is as follows. CRISPR (clustered regularly interspaced short palindromic repeat) is an adaptive immune system that provides protection against mobile genetic elements (viruses, transposable elements and conjugative plasmids). CRISPR clusters contain spacers, sequences complementary to antecedent mobile elements, and target invading nucleic acids. CRISPR clusters are transcribed and processed into CRISPR RNA (crRNA). In this organism endogenous ribonuclease 3 and Cas9 are required for correct coprocessing of pre-crRNA and the trans-encoded small RNA (tracrRNA). Cas9, crRNA and tracrRNA are required for cleavage of invading DNA. Complements pre-crRNA and tracrRNA coprocessing defects in an rnc deletion in S.pyogenes strain 370. This chain is Ribonuclease 3, found in Neisseria meningitidis serogroup A / serotype 4A (strain DSM 15465 / Z2491).